The following is a 322-amino-acid chain: MKMRYCVLVSVLAILVIRGSAENCGRQAGGALCPGGQCCSKWGWCGTTPDHCGTDCQSQCGGTPSPGPSGSDITNLIPRSTFDRMLLHRNDGACPGKNFYTYDGFIAAARSFGAFATTGDTDTRKREIAAFLAQTSHETTGGWASAPDGPYSWGYCFLREQGNPGAYCTPSAQWPCAPGRKYFGRGPIQITHNYNYGPAGKALGVDLLNNPDLVATDPAISFKTALWFWMTPQSPKPSCHDVITGRWTPSAADRSAGRLPGFGVITNIINGGLECGHGSDSRVQDRIGFYKRYCQIFGIGTGDNLDCGNQRSFGSGRLVDTM.

A signal peptide spans 1–21 (MKMRYCVLVSVLAILVIRGSA). The Chitin-binding type-1 domain maps to 22–62 (ENCGRQAGGALCPGGQCCSKWGWCGTTPDHCGTDCQSQCGG). Cystine bridges form between Cys24–Cys39, Cys33–Cys45, Cys38–Cys52, and Cys56–Cys60.

This sequence belongs to the glycosyl hydrolase 19 family. Chitinase class I subfamily.

The enzyme catalyses Random endo-hydrolysis of N-acetyl-beta-D-glucosaminide (1-&gt;4)-beta-linkages in chitin and chitodextrins.. In terms of biological role, defense against chitin-containing fungal pathogens. In Actinidia chinensis var. chinensis (Chinese soft-hair kiwi), this protein is Endochitinase.